The chain runs to 239 residues: Ribosomal RNA small subunit methyltransferase G (239 aa).

Residues Gly76, Phe81, 99 to 101 (DSS), 128 to 129 (IE), and Arg147 each bind S-adenosyl-L-methionine.

This sequence belongs to the methyltransferase superfamily. RNA methyltransferase RsmG family.

The protein localises to the cytoplasm. Functionally, specifically methylates the N7 position of a guanine in 16S rRNA. The polypeptide is Ribosomal RNA small subunit methyltransferase G (Prochlorococcus marinus (strain MIT 9515)).